The following is a 607-amino-acid chain: MDYRSLGLKTGLEIHIQLNTRRKLFCHCPPVLRDDEPHFRLERRLHVSVSELGAVDPAVMWEVRKRRRYVYEGYRDTTCLVELDEEPPHLPDEEALATAVAVAKMFNAKLFDEIHVMRKTVVDGSNVSGFQRTMLVAYGGRAKILGYDIGVETIALEEDAARKIAEEGKTVIYRLDRLGVPLIEIATEPMTYTPQQVEEVAWIIGYSVKITGRAKRGLGTVRQDVNVSIAGGAKTEIKGVPDLSLIPKVIEYEVQRQLNLLRIAEELKRRGVGRVEPSLVDVTQAFANTKSKVVKRVLEAGGRVVALKTPGFQKLLGAEVQPGRRFGTELADYVRAWTELGGLLHSDELPGYGITAEEVREVAARAGAESFVLLMGTDERELAEAAAVVAERLNAAPRGVPEETRGANPDGTTRFLRPRPGAARMYPETDIPPVKITFEILRKAEEVAKASIEGKLAELTSMGLSRDMALQLIKSPHLEKFEDLVAKYKVPPQQIATILLNVSKALAREGVEVTDEKIASVLDALAKRVITKEAVEEVLRNMKAGESAEEAARRLGLLRMPYDEVKKVVEEVVKAVGREKALGEVMRRYRGRVDVEDVKRAISEIHF.

A disordered region spans residues 399–428; that stretch reads GVPEETRGANPDGTTRFLRPRPGAARMYPE.

It belongs to the GatB/GatE family. GatE subfamily. As to quaternary structure, heterodimer of GatD and GatE.

It catalyses the reaction L-glutamyl-tRNA(Gln) + L-glutamine + ATP + H2O = L-glutaminyl-tRNA(Gln) + L-glutamate + ADP + phosphate + H(+). Functionally, allows the formation of correctly charged Gln-tRNA(Gln) through the transamidation of misacylated Glu-tRNA(Gln) in organisms which lack glutaminyl-tRNA synthetase. The reaction takes place in the presence of glutamine and ATP through an activated gamma-phospho-Glu-tRNA(Gln). The GatDE system is specific for glutamate and does not act on aspartate. This chain is Glutamyl-tRNA(Gln) amidotransferase subunit E, found in Pyrobaculum neutrophilum (strain DSM 2338 / JCM 9278 / NBRC 100436 / V24Sta) (Thermoproteus neutrophilus).